A 42-amino-acid chain; its full sequence is Photosystem I reaction center subunit IX (42 aa).

A helical membrane pass occupies residues 7 to 27 (YLSTAPVLATIWFIILAGLLI).

Belongs to the PsaJ family.

It is found in the plastid. Its subcellular location is the chloroplast thylakoid membrane. Its function is as follows. May help in the organization of the PsaE and PsaF subunits. The protein is Photosystem I reaction center subunit IX of Mesostigma viride (Green alga).